Reading from the N-terminus, the 372-residue chain is NAD(P)H-quinone oxidoreductase subunit 1 (372 aa).

A run of 8 helical transmembrane segments spans residues 27–47 (AVWM…GVLI), 97–117 (ALFT…YLIV), 128–148 (LGIG…GLLM), 166–186 (AAQS…IAMM), 204–224 (ILGW…IAAL), 254–274 (FALF…MVAI), 308–328 (AVGI…AILL), and 351–371 (VGLV…IAFG).

The protein belongs to the complex I subunit 1 family. NDH-1 is composed of at least 11 different subunits.

The protein localises to the cellular thylakoid membrane. It catalyses the reaction a plastoquinone + NADH + (n+1) H(+)(in) = a plastoquinol + NAD(+) + n H(+)(out). The catalysed reaction is a plastoquinone + NADPH + (n+1) H(+)(in) = a plastoquinol + NADP(+) + n H(+)(out). NDH-1 shuttles electrons from an unknown electron donor, via FMN and iron-sulfur (Fe-S) centers, to quinones in the respiratory and/or the photosynthetic chain. The immediate electron acceptor for the enzyme in this species is believed to be plastoquinone. Couples the redox reaction to proton translocation, and thus conserves the redox energy in a proton gradient. This is NAD(P)H-quinone oxidoreductase subunit 1 from Cyanothece sp. (strain PCC 7425 / ATCC 29141).